The chain runs to 321 residues: MISIKNVNKYYGKIQVLKDVSIEIESGEIFGIIGHSGAGKSTLLRCINGLEEYQEGSVLVSDKEVKSLNEKQMRDLRKELGMIFQHFSLLERKTVFDNVALPLECFGYSKAEIKKRVLELLEVVGISEKKNDKPRNLSGGQKQRVAIARALALNPQVLLCDEATSALDPNTTKSILSLLEDINKKLGITIIVVTHQMEVIKQICGRVAIMENGEVLEVGDTEEIFLRNTKGLRKLIGEESIILPKGTNIKILFPKDISNEAIITTMARELNIDVSIIFGKLEQFKDDILGSLIINISDKSGEQVKQYLTSKGIRWEEMINE.

One can recognise an ABC transporter domain in the interval Ile2–Gly237. Gly34–Ser41 contacts ATP.

It belongs to the ABC transporter superfamily. Methionine importer (TC 3.A.1.24) family. As to quaternary structure, the complex is composed of two ATP-binding proteins (MetN), two transmembrane proteins (MetI) and a solute-binding protein (MetQ).

It localises to the cell membrane. The enzyme catalyses L-methionine(out) + ATP + H2O = L-methionine(in) + ADP + phosphate + H(+). It carries out the reaction D-methionine(out) + ATP + H2O = D-methionine(in) + ADP + phosphate + H(+). In terms of biological role, part of the ABC transporter complex MetNIQ involved in methionine import. Responsible for energy coupling to the transport system. The chain is Methionine import ATP-binding protein MetN from Clostridioides difficile (strain 630) (Peptoclostridium difficile).